A 521-amino-acid chain; its full sequence is Glutamyl-tRNA(Gln) amidotransferase subunit A (521 aa).

Residues lysine 79 and serine 187 each act as charge relay system in the active site. The active-site Acyl-ester intermediate is serine 211.

It belongs to the amidase family. GatA subfamily. Heterotrimer of A, B and C subunits.

It catalyses the reaction L-glutamyl-tRNA(Gln) + L-glutamine + ATP + H2O = L-glutaminyl-tRNA(Gln) + L-glutamate + ADP + phosphate + H(+). Its function is as follows. Allows the formation of correctly charged Gln-tRNA(Gln) through the transamidation of misacylated Glu-tRNA(Gln) in organisms which lack glutaminyl-tRNA synthetase. The reaction takes place in the presence of glutamine and ATP through an activated gamma-phospho-Glu-tRNA(Gln). This chain is Glutamyl-tRNA(Gln) amidotransferase subunit A, found in Mesorhizobium japonicum (strain LMG 29417 / CECT 9101 / MAFF 303099) (Mesorhizobium loti (strain MAFF 303099)).